The primary structure comprises 467 residues: Glutamate--tRNA ligase (467 aa).

A 'HIGH' region motif is present at residues 9-19 (PSPTGNLHIGS). Residues 237 to 241 (KISKR) carry the 'KMSKS' region motif. Residue Lys240 participates in ATP binding.

Belongs to the class-I aminoacyl-tRNA synthetase family. Glutamate--tRNA ligase type 1 subfamily. In terms of assembly, monomer.

Its subcellular location is the cytoplasm. The catalysed reaction is tRNA(Glu) + L-glutamate + ATP = L-glutamyl-tRNA(Glu) + AMP + diphosphate. Its function is as follows. Catalyzes the attachment of glutamate to tRNA(Glu) in a two-step reaction: glutamate is first activated by ATP to form Glu-AMP and then transferred to the acceptor end of tRNA(Glu). The protein is Glutamate--tRNA ligase of Buchnera aphidicola subsp. Acyrthosiphon pisum (strain APS) (Acyrthosiphon pisum symbiotic bacterium).